A 112-amino-acid chain; its full sequence is MKEKKAQLYEGAYVFSVTLSEEARRKALEKVTSGITNYGGEILKIHDQGRKKLAYTIRGAREGYYYLIYFTVVPGVIAELWKEYHLNEDLLRFLTLKADAVKEVLEFASLPE.

The protein belongs to the bacterial ribosomal protein bS6 family.

Binds together with bS18 to 16S ribosomal RNA. This is Small ribosomal subunit protein bS6 from Chlamydia caviae (strain ATCC VR-813 / DSM 19441 / 03DC25 / GPIC) (Chlamydophila caviae).